Consider the following 427-residue polypeptide: Serine hydroxymethyltransferase (427 aa).

122–124 contacts (6S)-5,6,7,8-tetrahydrofolate; the sequence is GHI. An N6-(pyridoxal phosphate)lysine modification is found at lysine 228.

Belongs to the SHMT family. In terms of assembly, homodimer. Pyridoxal 5'-phosphate serves as cofactor.

Its subcellular location is the cytoplasm. The protein operates within amino-acid biosynthesis; glycine biosynthesis; glycine from L-serine: step 1/1. Functionally, catalyzes the reversible interconversion of serine and glycine with a modified folate serving as the one-carbon carrier. Also exhibits a pteridine-independent aldolase activity toward beta-hydroxyamino acids, producing glycine and aldehydes, via a retro-aldol mechanism. The sequence is that of Serine hydroxymethyltransferase from Thermococcus onnurineus (strain NA1).